The sequence spans 124 residues: Small ribosomal subunit protein uS12 (124 aa).

Aspartate 89 is subject to 3-methylthioaspartic acid.

This sequence belongs to the universal ribosomal protein uS12 family. In terms of assembly, part of the 30S ribosomal subunit. Contacts proteins S8 and S17. May interact with IF1 in the 30S initiation complex.

In terms of biological role, with S4 and S5 plays an important role in translational accuracy. Interacts with and stabilizes bases of the 16S rRNA that are involved in tRNA selection in the A site and with the mRNA backbone. Located at the interface of the 30S and 50S subunits, it traverses the body of the 30S subunit contacting proteins on the other side and probably holding the rRNA structure together. The combined cluster of proteins S8, S12 and S17 appears to hold together the shoulder and platform of the 30S subunit. In Acinetobacter baumannii (strain AB307-0294), this protein is Small ribosomal subunit protein uS12.